The sequence spans 168 residues: HTH-type transcriptional regulator IscR (168 aa).

An HTH rrf2-type domain is found at 2–131 (KLTSKGRYAV…NNITLGELMK (130 aa)). Residues 28-51 (LADISERQGISLSYLEQLFSKLRK) constitute a DNA-binding region (H-T-H motif). The [2Fe-2S] cluster site is built by C92, C98, and C104.

The cofactor is [2Fe-2S] cluster.

In terms of biological role, regulates the transcription of several operons and genes involved in the biogenesis of Fe-S clusters and Fe-S-containing proteins. The chain is HTH-type transcriptional regulator IscR from Vibrio campbellii (strain ATCC BAA-1116).